Consider the following 884-residue polypeptide: Alanine--tRNA ligase (884 aa).

Zn(2+) is bound by residues histidine 562, histidine 566, cysteine 674, and histidine 678.

This sequence belongs to the class-II aminoacyl-tRNA synthetase family. The cofactor is Zn(2+).

It localises to the cytoplasm. The enzyme catalyses tRNA(Ala) + L-alanine + ATP = L-alanyl-tRNA(Ala) + AMP + diphosphate. Its function is as follows. Catalyzes the attachment of alanine to tRNA(Ala) in a two-step reaction: alanine is first activated by ATP to form Ala-AMP and then transferred to the acceptor end of tRNA(Ala). Also edits incorrectly charged Ser-tRNA(Ala) and Gly-tRNA(Ala) via its editing domain. The chain is Alanine--tRNA ligase from Rhizobium etli (strain ATCC 51251 / DSM 11541 / JCM 21823 / NBRC 15573 / CFN 42).